The following is a 345-amino-acid chain: MNLADFDYHLPPERIAAEPARPRHAARLLHVRGDGLDDRTILDLPALLAPGDLLVVNDTRVIPAQLTGRRGDARIGITLDRPLADGTWRVLLRNARRARPGETIAIDGAGGIAAEVIDRAPDGSATLRFDCDAETFRAMLDRAASLALPPYIPRPAGISEQDRQDYQTMFAAEEGAVAAPTAGLHFTETVLAALAARGVGLATVTLHVGAGTFLPVREDQLERHKLHAERGLIGPETAALVNATRARGGRIVAVGTTSLRVLETAAGDDGTLAPWHGETELFITPGYRFKLVDRLMTNFHLPKSTLLMLVAAFAGVERMRAAYAHAIARGYRFYSYGDASLLERA.

It belongs to the QueA family. As to quaternary structure, monomer.

Its subcellular location is the cytoplasm. It catalyses the reaction 7-aminomethyl-7-carbaguanosine(34) in tRNA + S-adenosyl-L-methionine = epoxyqueuosine(34) in tRNA + adenine + L-methionine + 2 H(+). The protein operates within tRNA modification; tRNA-queuosine biosynthesis. In terms of biological role, transfers and isomerizes the ribose moiety from AdoMet to the 7-aminomethyl group of 7-deazaguanine (preQ1-tRNA) to give epoxyqueuosine (oQ-tRNA). The polypeptide is S-adenosylmethionine:tRNA ribosyltransferase-isomerase (Acidiphilium cryptum (strain JF-5)).